Reading from the N-terminus, the 507-residue chain is MEEHQVYLELDRSRQQDFLYPLVFREYIYGLAYGHDLNRSIFAENVGYDNKSSLLIVKRLITRMYQQNHLIISANDSKKNTFLRYNNNIYSQIISEGFAVVVEIPFSLQLSSSLEEAEILKSYNNLQSIHSIFPFFEDKFTYLNYLSDIRIPYPIHLEILVQILRYWVKDVPFFHLLRLFLYDYCNSNSLITPKKWISTFSKSNPRFFFFLYNFYVCEYESIFYFLRNKSSHLRLKSFSVFFERIFFYAKRKHLVEVVAKDFLSTLTFFKDPFIHYVRYQGKSILASKNAPLLMNKWKYYFIHLWQCHFDLWAQPGTIHINLLSEHSFHFLGYFLNVRLNRSVVRSQMLQNAFLIEMVIKKLDIIVPIIPLIRSLAKANFCNGLGNPISKPVWADSSDFDIIDRFLRICRNLSHYYNGSSKKKSLYRIKYILRLSCIKTLACKHKSTVRAFLKRLGSEKLLEEFFIEEQEIVSLIFPRASXTLQRLHRNRIWYLDILFFSNDLVNHE.

It belongs to the intron maturase 2 family. MatK subfamily.

It localises to the plastid. Its subcellular location is the chloroplast. Usually encoded in the trnK tRNA gene intron. Probably assists in splicing its own and other chloroplast group II introns. In Robinia pseudoacacia (Black locust), this protein is Maturase K.